Consider the following 599-residue polypeptide: Peptidyl-Asp metalloendopeptidase (599 aa).

The signal sequence occupies residues methionine 1 to alanine 20. Histidine 164 contributes to the Zn(2+) binding site. Residue glutamate 165 is part of the active site. The Zn(2+) site is built by histidine 168 and histidine 174. Positions proline 265 to aspartate 285 are disordered. The CBM-cenC domain maps to tyrosine 458–glycine 583.

It belongs to the peptidase M72 family. In terms of assembly, interacts with BamI, the product of its coregulated adjacent gene, which inhibits its protease activity. Zn(2+) is required as a cofactor. Made as a membrane-associated pre-pro-protein, which is exported to the periplasm with removal of the signal peptide, leading to a protein with a molecular mass of 65 kDa, that likely contains the metzincin domain plus tandem carbohydrate-binding domains. Undergoes processing during export to the extracellular milieu, probably by autocatalysis, yielding a (mature length) 25 kDa protein that most likely corresponds to the metzincin domain only.

Its subcellular location is the secreted. The catalysed reaction is Cleavage of Xaa-|-Asp, Xaa-|-Glu and Xaa-|-cysteic acid bonds.. Its activity is regulated as follows. Is inhibited by BamI, the product of its coregulated adjacent gene. In terms of biological role, metalloprotease with endopeptidase activity. Specifically cleaves on the N-terminal side of aspartyl, glutamyl and cysteic acid residues. Mep72 appears to be a secreted biofilm-specific regulator that affects the processing of a very specific subset of virulence factors exported by the type III secretion machinery as well as flagellar proteins. Binds directly to ExoS and PcrV and affects the processing of these proteins in the biofilm secretome, but contrary to expectation, Mep72 seems to protect these targets against proteolytic processing/degradation. This is Peptidyl-Asp metalloendopeptidase from Pseudomonas aeruginosa (strain ATCC 15692 / DSM 22644 / CIP 104116 / JCM 14847 / LMG 12228 / 1C / PRS 101 / PAO1).